The sequence spans 429 residues: Protein FAM98B (429 aa).

The segment at 304-429 is disordered; sequence RVPDRGGRPN…GGGGGGYRRY (126 aa). Positions 305-314 are enriched in basic and acidic residues; it reads VPDRGGRPNE. Over residues 332–429 the composition is skewed to gly residues; that stretch reads GGRGGWGGGG…GGGGGGYRRY (98 aa).

It belongs to the FAM98 family. As to quaternary structure, homodimer. Component of a tRNA-splicing ligase complex. Interacts with FAM98A.

Its subcellular location is the nucleus. It is found in the cytoplasm. Its function is as follows. Positively stimulates PRMT1-induced protein arginine dimethylated arginine methylation. The protein is Protein FAM98B (Fam98b) of Mus musculus (Mouse).